Reading from the N-terminus, the 52-residue chain is uncharacterized protein (52 aa).

This is an uncharacterized protein from Saccharomyces cerevisiae (strain ATCC 204508 / S288c) (Baker's yeast).